The primary structure comprises 336 residues: DNA-directed RNA polymerase subunit alpha (336 aa).

The tract at residues 1-232 (MIQKNWQELI…DQLGLFVNFE (232 aa)) is alpha N-terminal domain (alpha-NTD). The alpha C-terminal domain (alpha-CTD) stretch occupies residues 248–336 (FNPALLKKVD…ELAKRYEDQY (89 aa)).

It belongs to the RNA polymerase alpha chain family. Homodimer. The RNAP catalytic core consists of 2 alpha, 1 beta, 1 beta' and 1 omega subunit. When a sigma factor is associated with the core the holoenzyme is formed, which can initiate transcription.

The enzyme catalyses RNA(n) + a ribonucleoside 5'-triphosphate = RNA(n+1) + diphosphate. Functionally, DNA-dependent RNA polymerase catalyzes the transcription of DNA into RNA using the four ribonucleoside triphosphates as substrates. This Chelativorans sp. (strain BNC1) protein is DNA-directed RNA polymerase subunit alpha.